Here is a 107-residue protein sequence, read N- to C-terminus: L-amino-acid oxidase (107 aa).

G35 to R38 contacts FAD. Substrate contacts are provided by R38 and H49.

The protein belongs to the flavin monoamine oxidase family. FIG1 subfamily. As to quaternary structure, homodimer; non-covalently linked. FAD serves as cofactor. Post-translationally, N-glycosylated. Expressed by the venom gland.

The protein localises to the secreted. It carries out the reaction an L-alpha-amino acid + O2 + H2O = a 2-oxocarboxylate + H2O2 + NH4(+). It catalyses the reaction L-leucine + O2 + H2O = 4-methyl-2-oxopentanoate + H2O2 + NH4(+). The enzyme catalyses L-phenylalanine + O2 + H2O = 3-phenylpyruvate + H2O2 + NH4(+). The catalysed reaction is L-tryptophan + O2 + H2O = indole-3-pyruvate + H2O2 + NH4(+). It carries out the reaction L-methionine + O2 + H2O = 4-methylsulfanyl-2-oxobutanoate + H2O2 + NH4(+). It catalyses the reaction L-isoleucine + O2 + H2O = (S)-3-methyl-2-oxopentanoate + H2O2 + NH4(+). The enzyme catalyses L-arginine + O2 + H2O = 5-guanidino-2-oxopentanoate + H2O2 + NH4(+). The catalysed reaction is L-histidine + O2 + H2O = 3-(imidazol-5-yl)pyruvate + H2O2 + NH4(+). Its function is as follows. Catalyzes an oxidative deamination of predominantly hydrophobic and aromatic L-amino acids, thus producing hydrogen peroxide that may contribute to the diverse toxic effects of this enzyme. Shows high activity on L-Met, moderate activity on L-Trp, L-Leu, L-His, L-Phe, L-Arg, L-Ile, low activity on L-Val, L-Glu, L-Lys, L-Gln, L-Asn, L-Tyr, L-Ala, and no activity on L-Asp, L-Ser, L-Pro, L-Gly, L-Thr and L-Cys. Shows antimicrobial activity inhibiting the growth of both Gram-negative and Gram-positive bacteria. Also inhibits platelet aggregation induced by ADP or collagen. Effects of snake L-amino oxidases on platelets are controversial, since they either induce aggregation or inhibit agonist-induced aggregation. These different effects are probably due to different experimental conditions. This protein may also induce hemorrhage, hemolysis, edema, apoptosis, and have antiparasitic activities. This Macrovipera lebetinus (Levantine viper) protein is L-amino-acid oxidase.